We begin with the raw amino-acid sequence, 91 residues long: Small ribosomal subunit protein bS20 (91 aa).

Positions 1 to 26 (MANLKSSKKDIRRTARRKERNGEDRT) are disordered.

Belongs to the bacterial ribosomal protein bS20 family.

Binds directly to 16S ribosomal RNA. The polypeptide is Small ribosomal subunit protein bS20 (Leptospira biflexa serovar Patoc (strain Patoc 1 / Ames)).